We begin with the raw amino-acid sequence, 245 residues long: Endonuclease III (245 aa).

The region spanning 119-138 (MVDLFTLPGVGRKTANVILG) is the HhH domain. [4Fe-4S] cluster-binding residues include C198, C205, C208, and C214.

The protein belongs to the Nth/MutY family. Requires [4Fe-4S] cluster as cofactor.

It carries out the reaction 2'-deoxyribonucleotide-(2'-deoxyribose 5'-phosphate)-2'-deoxyribonucleotide-DNA = a 3'-end 2'-deoxyribonucleotide-(2,3-dehydro-2,3-deoxyribose 5'-phosphate)-DNA + a 5'-end 5'-phospho-2'-deoxyribonucleoside-DNA + H(+). Its function is as follows. DNA repair enzyme that has both DNA N-glycosylase activity and AP-lyase activity. The DNA N-glycosylase activity releases various damaged pyrimidines from DNA by cleaving the N-glycosidic bond, leaving an AP (apurinic/apyrimidinic) site. The AP-lyase activity cleaves the phosphodiester bond 3' to the AP site by a beta-elimination, leaving a 3'-terminal unsaturated sugar and a product with a terminal 5'-phosphate. The sequence is that of Endonuclease III from Mycobacterium leprae (strain TN).